Here is a 132-residue protein sequence, read N- to C-terminus: Cytochrome c-554 (132 aa).

Positions 1–24 (MKSISMLTLAASVAFAVTAGQAVA) are cleaved as a signal peptide. The Cytochrome c domain occupies 26-126 (GDPAAGEKVF…NVWAYLSQFG (101 aa)). Residues Cys-38, Cys-41, His-42, and Met-104 each coordinate heme c.

Binds 1 heme c group covalently per subunit.

Its subcellular location is the periplasm. This Methylosinus trichosporium protein is Cytochrome c-554.